We begin with the raw amino-acid sequence, 472 residues long: MGKKEMIMVKGIPKIMLLISITFLLLSLINCNVLVNSRGTRRSWPYTVLSYRGKEILKKQKEDILKRLMSTSSDGYRFLMYPSQQKFHAIVISMDKFPQDYILAGPIRNDSITHMWFDFYSTQLRKPAKYVYSEYNHTAHKITLRPPPCGTVPSMNCLSEMLNVSKRNDTGEKGCGNFTTFNPMFFNVPRWNTKLYIGSNKVNVDSQTIYFLGLTALLLRYAQRNCTRSFYLVNAMSRNLFRVPKYINGTKLKNTMRKLKRKQALVKEQPQKKNKKSQSTTTPYLSYTTSTAFNVTTNVTYSATAAVTRVATSTTGYRPDSNFMKSIMATQLRDLATWVYTTLRYRNEPFCKPDRNRTAVSEFMKNTHVLIRNETPYTIYGTLDMSSLYYNETMSVENETASDNNETTPTSPSTRFQRTFIDPLWDYLDSLLFLDKIRNFSLQLPAYGNLTPPEHRRAANLSTLNSLWWWSQ.

The N-terminal stretch at Met1–Cys31 is a signal peptide. Asn109, Asn136, Asn163, Asn168, Asn177, Asn225, Asn248, Asn294, Asn298, Asn356, Asn391, Asn398, Asn405, Asn439, and Asn460 each carry an N-linked (GlcNAc...) asparagine; by host glycan.

This sequence belongs to the herpesviridae U47 family. Forms the envelope trimer complex composed of gH, gL, and gO. The trimer interacts with host PDGFRA. Post-translationally, N-glycosylated. In terms of processing, the N-terminus is blocked.

The protein localises to the virion membrane. Its function is as follows. Plays a role in viral entry into host cells. Forms a trimeric complex at the surface of the viral envelope together with gH and gL. This complex is required for entry in host fibroblasts. Mechanistically, engages host receptor(s) including PDGFRA to mediate infection. The protein is Envelope glycoprotein O (UL74) of Human cytomegalovirus (strain Merlin) (HHV-5).